The chain runs to 92 residues: Large ribosomal subunit protein bL28 (92 aa).

Belongs to the bacterial ribosomal protein bL28 family.

In Borreliella burgdorferi (strain ATCC 35210 / DSM 4680 / CIP 102532 / B31) (Borrelia burgdorferi), this protein is Large ribosomal subunit protein bL28.